The sequence spans 285 residues: MASKQRENVFPTRMTLTTMKTRLKGAQTGHSLLKRKSEALKKRFREIVVNIEQAKQKMGRVMQIAAFSMAEVGFAMGNNINFEIQQSVKQPRLRVRSKQENISGVFLPTFEMNLDESIDDFQLTGLGKGGQQIQKARQVYEKAVETLVQLASYQSAFVLLGDVLQMTNRRVNSIEHIIIPRLENTIKYIESELEELEREDFTRLKKVQKTKENAEKADSVTKEEHQGGSNTLQQTKDVGGAIAPAAEVGKEVINEVENSKDDTYSLPSTSTDDEEENDSDEEVIF.

Residues 208–226 are compositionally biased toward basic and acidic residues; sequence QKTKENAEKADSVTKEEHQ. The tract at residues 208–285 is disordered; sequence QKTKENAEKA…ENDSDEEVIF (78 aa). Ser219 is modified (phosphoserine). Residues 227 to 236 show a composition bias toward polar residues; the sequence is GGSNTLQQTK. Residues 248–263 are compositionally biased toward basic and acidic residues; it reads VGKEVINEVENSKDDT. Residues 271–285 are compositionally biased toward acidic residues; the sequence is TDDEEENDSDEEVIF.

Belongs to the V-ATPase D subunit family. In terms of assembly, V-ATPase is a heteromultimeric enzyme composed of a peripheral catalytic V1 complex (components A to H) attached to an integral membrane V0 proton pore complex (components: a, c, c', c'', d, e, f and VOA1).

It is found in the vacuole membrane. Functionally, subunit of the V1 complex of vacuolar(H+)-ATPase (V-ATPase), a multisubunit enzyme composed of a peripheral complex (V1) that hydrolyzes ATP and a membrane integral complex (V0) that translocates protons. V-ATPase is responsible for acidifying and maintaining the pH of intracellular compartments. The sequence is that of V-type proton ATPase subunit D (vma8) from Schizosaccharomyces pombe (strain 972 / ATCC 24843) (Fission yeast).